The following is a 776-amino-acid chain: 5-methyltetrahydropteroyltriglutamate--homocysteine methyltransferase (776 aa).

Residues 16-19 and K112 each bind 5-methyltetrahydropteroyltri-L-glutamate; that span reads RELK. Residues 435-437 and E488 each bind L-homocysteine; that span reads IGS. L-methionine-binding positions include 435–437 and E488; that span reads IGS. 5-methyltetrahydropteroyltri-L-glutamate-binding positions include 519–520 and W565; that span reads RC. D603 provides a ligand contact to L-homocysteine. D603 is a binding site for L-methionine. Residue E609 participates in 5-methyltetrahydropteroyltri-L-glutamate binding. 3 residues coordinate Zn(2+): H645, C647, and E669. H698 (proton donor) is an active-site residue. C730 contributes to the Zn(2+) binding site.

It belongs to the vitamin-B12 independent methionine synthase family. The cofactor is Zn(2+).

The catalysed reaction is 5-methyltetrahydropteroyltri-L-glutamate + L-homocysteine = tetrahydropteroyltri-L-glutamate + L-methionine. The protein operates within amino-acid biosynthesis; L-methionine biosynthesis via de novo pathway; L-methionine from L-homocysteine (MetE route): step 1/1. Functionally, catalyzes the transfer of a methyl group from 5-methyltetrahydrofolate to homocysteine resulting in methionine formation. This chain is 5-methyltetrahydropteroyltriglutamate--homocysteine methyltransferase, found in Ralstonia pickettii (strain 12J).